A 577-amino-acid polypeptide reads, in one-letter code: Maltase A1 (577 aa).

The N-terminal stretch at 1 to 19 (MRPQSAACLLLAIVGFVGA) is a signal peptide. 2 N-linked (GlcNAc...) asparagine glycosylation sites follow: Asn-119 and Asn-151. Catalysis depends on Asp-221, which acts as the Nucleophile. N-linked (GlcNAc...) asparagine glycosylation is present at Asn-244. Residue Glu-297 is the Proton donor of the active site. Asn-315 and Asn-331 each carry an N-linked (GlcNAc...) asparagine glycan.

Belongs to the glycosyl hydrolase 13 family.

It catalyses the reaction Hydrolysis of terminal, non-reducing (1-&gt;4)-linked alpha-D-glucose residues with release of alpha-D-glucose.. This chain is Maltase A1 (Mal-A1), found in Drosophila melanogaster (Fruit fly).